The sequence spans 388 residues: Succinate--CoA ligase [ADP-forming] subunit beta (388 aa).

Residues 9–244 enclose the ATP-grasp domain; the sequence is KQLFARYGMP…LSQEDERESR (236 aa). Residues Lys46, 53-55, Glu99, Thr102, and Glu107 each bind ATP; that span reads GRG. Asn199 and Asp213 together coordinate Mg(2+). Residues Asn264 and 321 to 323 each bind substrate; that span reads GIV.

This sequence belongs to the succinate/malate CoA ligase beta subunit family. In terms of assembly, heterotetramer of two alpha and two beta subunits. Mg(2+) serves as cofactor.

The catalysed reaction is succinate + ATP + CoA = succinyl-CoA + ADP + phosphate. It catalyses the reaction GTP + succinate + CoA = succinyl-CoA + GDP + phosphate. The protein operates within carbohydrate metabolism; tricarboxylic acid cycle; succinate from succinyl-CoA (ligase route): step 1/1. Functionally, succinyl-CoA synthetase functions in the citric acid cycle (TCA), coupling the hydrolysis of succinyl-CoA to the synthesis of either ATP or GTP and thus represents the only step of substrate-level phosphorylation in the TCA. The beta subunit provides nucleotide specificity of the enzyme and binds the substrate succinate, while the binding sites for coenzyme A and phosphate are found in the alpha subunit. This is Succinate--CoA ligase [ADP-forming] subunit beta from Serratia proteamaculans (strain 568).